The primary structure comprises 442 residues: Adenylosuccinate synthetase (442 aa).

Residues 25-31, 53-55, and Lys62 each bind GTP; these read GDEGKGK and GHT. Asp26 functions as the Proton acceptor in the catalytic mechanism. Residues Asp26 and Gly53 each contribute to the Mg(2+) site. Residues 26–29 and 51–54 contribute to the IMP site; these read DEGK and NAGH. His54 functions as the Proton donor in the catalytic mechanism. Residues Thr141, Arg155, Asn232, and Thr247 each contribute to the IMP site. Thr307 serves as a coordination point for GTP. 307-313 serves as a coordination point for substrate; it reads TTTKRPR. Position 311 (Arg311) interacts with IMP. Residues Arg313, 339-341, and 425-427 each bind GTP; these read KLD and GVG.

Belongs to the adenylosuccinate synthetase family. Homodimer. It depends on Mg(2+) as a cofactor.

It localises to the cytoplasm. It carries out the reaction IMP + L-aspartate + GTP = N(6)-(1,2-dicarboxyethyl)-AMP + GDP + phosphate + 2 H(+). It participates in purine metabolism; AMP biosynthesis via de novo pathway; AMP from IMP: step 1/2. Its function is as follows. Plays an important role in the salvage pathway for purine nucleotide biosynthesis. Catalyzes the first committed step in the biosynthesis of AMP from IMP. The protein is Adenylosuccinate synthetase (Adss) of Plasmodium falciparum (isolate 3D7).